The following is a 126-amino-acid chain: Aspartate 1-decarboxylase (126 aa).

The active-site Schiff-base intermediate with substrate; via pyruvic acid is S25. The residue at position 25 (S25) is a Pyruvic acid (Ser). T57 is a binding site for substrate. Residue Y58 is the Proton donor of the active site. Residue 73 to 75 participates in substrate binding; sequence GAA.

It belongs to the PanD family. In terms of assembly, heterooctamer of four alpha and four beta subunits. Requires pyruvate as cofactor. Is synthesized initially as an inactive proenzyme, which is activated by self-cleavage at a specific serine bond to produce a beta-subunit with a hydroxyl group at its C-terminus and an alpha-subunit with a pyruvoyl group at its N-terminus.

The protein resides in the cytoplasm. The enzyme catalyses L-aspartate + H(+) = beta-alanine + CO2. The protein operates within cofactor biosynthesis; (R)-pantothenate biosynthesis; beta-alanine from L-aspartate: step 1/1. Functionally, catalyzes the pyruvoyl-dependent decarboxylation of aspartate to produce beta-alanine. This is Aspartate 1-decarboxylase from Edwardsiella ictaluri (strain 93-146).